The primary structure comprises 514 residues: Nitric oxide reductase transcription regulator NorR1 (514 aa).

Asp54 is subject to 4-aspartylphosphate. One can recognise a Sigma-54 factor interaction domain in the interval 187–416 (IIGQSQAIAG…LEHVISRAAL (230 aa)). Residues 215-222 (GETGVGKE) and 287-296 (EVGELPLSIQ) contribute to the ATP site. Positions 490-509 (WAKAARQLGMDASNLHKLAK) form a DNA-binding region, H-T-H motif.

Its pathway is nitrogen metabolism; nitrate reduction (denitrification) [regulation]. Required for the nitric oxide (NO) induced expression of NO reductase. Not required for expression of 2 other pathway members, nitrate reductase (nirS) and nitrous oxide reductase (nosZ). The chain is Nitric oxide reductase transcription regulator NorR1 (norR1) from Cupriavidus necator (strain ATCC 17699 / DSM 428 / KCTC 22496 / NCIMB 10442 / H16 / Stanier 337) (Ralstonia eutropha).